The chain runs to 154 residues: Leghemoglobin-1 (154 aa).

Residues 3–151 (VLTDVQVALV…LAIIIKKEMK (149 aa)) enclose the Globin domain. Residue Ser-46 coordinates heme b. Ser-46 carries the post-translational modification Phosphoserine. His-64 provides a ligand contact to O2. The heme b site is built by Lys-67, His-98, and Lys-101. At Tyr-139 the chain carries Nitrated tyrosine.

The protein belongs to the plant globin family. Monomer. Post-translationally, nitrated in effective nodules and particularly in hypoxic conditions; this mechanism may play a protective role in the symbiosis by buffering toxic peroxynitrite NO(2)(-). Nitration level decrease during nodule senescence. In terms of processing, phosphorylation at Ser-46 disrupts the molecular environment of its porphyrin ring oxygen binding pocket, thus leading to a reduced oxygen consumption and to the delivery of oxygen O(2) to symbiosomes. Accumulates in developing root nodules and present in roots, especially in the upper part. Detected in leaves at low levels.

It localises to the cytoplasm. Its subcellular location is the cytosol. It is found in the nucleus. Its function is as follows. Leghemoglobin that reversibly binds oxygen O(2) through a pentacoordinated heme iron. In root nodules, facilitates the diffusion of oxygen to the bacteroids while preventing the bacterial nitrogenase from being inactivated by buffering dioxygen, nitric oxide and carbon monoxide, and promoting the formation of reactive oxygen species (ROS, e.g. H(2)O(2)). This role is essential for symbiotic nitrogen fixation (SNF). This chain is Leghemoglobin-1, found in Lupinus luteus (European yellow lupine).